The following is a 274-amino-acid chain: Urease accessory protein UreD (274 aa).

This sequence belongs to the UreD family. UreD, UreF and UreG form a complex that acts as a GTP-hydrolysis-dependent molecular chaperone, activating the urease apoprotein by helping to assemble the nickel containing metallocenter of UreC. The UreE protein probably delivers the nickel.

It is found in the cytoplasm. Its function is as follows. Required for maturation of urease via the functional incorporation of the urease nickel metallocenter. This chain is Urease accessory protein UreD, found in Enterobacter sp. (strain 638).